Here is a 147-residue protein sequence, read N- to C-terminus: 6-pyruvoyl tetrahydrobiopterin synthase (147 aa).

Position 26 (His-26) interacts with Zn(2+). Cys-45 (proton acceptor) is an active-site residue. Zn(2+)-binding residues include His-51 and His-53. Residues His-92 and Glu-136 each act as charge relay system in the active site.

The protein belongs to the PTPS family. In terms of assembly, homohexamer formed of two homotrimers in a head to head fashion. Zn(2+) is required as a cofactor.

It carries out the reaction 7,8-dihydroneopterin 3'-triphosphate = 6-pyruvoyl-5,6,7,8-tetrahydropterin + triphosphate + H(+). It participates in cofactor biosynthesis; tetrahydrobiopterin biosynthesis; tetrahydrobiopterin from 7,8-dihydroneopterin triphosphate: step 1/3. Involved in the biosynthesis of tetrahydrobiopterin, an essential cofactor of aromatic amino acid hydroxylases. Catalyzes the transformation of 7,8-dihydroneopterin triphosphate into 6-pyruvoyl tetrahydropterin. The polypeptide is 6-pyruvoyl tetrahydrobiopterin synthase (pts) (Poecilia reticulata (Guppy)).